The chain runs to 184 residues: ATP synthase subunit b, chloroplastic (184 aa).

Residues 27–49 (LATNPINLSVVLGVLIFFGKGVL) form a helical membrane-spanning segment.

This sequence belongs to the ATPase B chain family. In terms of assembly, F-type ATPases have 2 components, F(1) - the catalytic core - and F(0) - the membrane proton channel. F(1) has five subunits: alpha(3), beta(3), gamma(1), delta(1), epsilon(1). F(0) has four main subunits: a(1), b(1), b'(1) and c(10-14). The alpha and beta chains form an alternating ring which encloses part of the gamma chain. F(1) is attached to F(0) by a central stalk formed by the gamma and epsilon chains, while a peripheral stalk is formed by the delta, b and b' chains.

It is found in the plastid. The protein resides in the chloroplast thylakoid membrane. F(1)F(0) ATP synthase produces ATP from ADP in the presence of a proton or sodium gradient. F-type ATPases consist of two structural domains, F(1) containing the extramembraneous catalytic core and F(0) containing the membrane proton channel, linked together by a central stalk and a peripheral stalk. During catalysis, ATP synthesis in the catalytic domain of F(1) is coupled via a rotary mechanism of the central stalk subunits to proton translocation. In terms of biological role, component of the F(0) channel, it forms part of the peripheral stalk, linking F(1) to F(0). The polypeptide is ATP synthase subunit b, chloroplastic (Phalaenopsis aphrodite subsp. formosana (Moth orchid)).